The following is a 350-amino-acid chain: tRNA uridine(34) hydroxylase (350 aa).

Positions D146–L240 constitute a Rhodanese domain. The active-site Cysteine persulfide intermediate is C200. The span at R319–G328 shows a compositional bias: basic and acidic residues. Residues R319–E350 are disordered.

Belongs to the TrhO family.

It carries out the reaction uridine(34) in tRNA + AH2 + O2 = 5-hydroxyuridine(34) in tRNA + A + H2O. Catalyzes oxygen-dependent 5-hydroxyuridine (ho5U) modification at position 34 in tRNAs. This is tRNA uridine(34) hydroxylase from Salmonella typhimurium (strain LT2 / SGSC1412 / ATCC 700720).